Here is a 191-residue protein sequence, read N- to C-terminus: Thymidine kinase (191 aa).

ATP contacts are provided by residues 9 to 16 and 85 to 88; these read GSMNSGKT and DESQ. The Proton acceptor role is filled by glutamate 86. Zn(2+) contacts are provided by cysteine 143, cysteine 146, cysteine 181, and cysteine 184.

It belongs to the thymidine kinase family. In terms of assembly, homotetramer.

It is found in the cytoplasm. It carries out the reaction thymidine + ATP = dTMP + ADP + H(+). The protein is Thymidine kinase of Listeria innocua serovar 6a (strain ATCC BAA-680 / CLIP 11262).